The sequence spans 1349 residues: Periaxin (1349 aa).

Serine 7 is subject to Phosphoserine. Positions 16 to 99 constitute a PDZ domain; the sequence is LVEIIVETEA…YKVSFCLKRT (84 aa). Residues 70-84 carry the Nuclear export signal motif; that stretch reads VFFENFKYEDALRLL. A Phosphoserine modification is found at serine 133. 41 consecutive repeat copies span residues 402 to 406, 410 to 414, 418 to 422, 426 to 430, 431 to 435, 436 to 440, 444 to 448, 452 to 456, 457 to 461, 462 to 466, 467 to 471, 472 to 476, 477 to 481, 485 to 489, 493 to 497, 501 to 505, 506 to 510, 514 to 518, 519 to 523, 524 to 528, 532 to 536, 537 to 549, 553 to 557, 558 to 562, 563 to 567, 571 to 575, 576 to 580, 589 to 593, 594 to 598, 599 to 603, 612 to 616, 617 to 621, 622 to 626, 630 to 634, 635 to 639, 643 to 647, 648 to 652, 653 to 657, 661 to 665, 669 to 673, and 674 to 678. The segment at 402–678 is 41 X 5 AA approximate tandem repeats of [LVMGIE]-[PSM]-[EDKA]-[LIVMA]-[AQKHPRT]; that may have a tripeptide spacer of [ALKD]-[IPV]-[KPH]; that stretch reads PPEVKVPKGP…APEVKLPKAP (277 aa). Phosphoserine occurs at positions 794 and 974. The span at 1207–1218 shows a compositional bias: basic and acidic residues; the sequence is AKEGAEEGEKAK. The segment at 1207–1349 is disordered; the sequence is AKEGAEEGEK…RMEGAQAAVI (143 aa). The segment covering 1232–1242 has biased composition (low complexity); sequence SEAVSGEGSPS. Phosphoserine occurs at positions 1236, 1240, 1242, 1289, 1295, and 1327.

It belongs to the periaxin family. In terms of assembly, homodimer (via PDZ domain). Interacts with SCN10A. Found in a complex with SCN10A. Interacts with DRP2. Identified in a dystroglycan complex that contains at least PRX, DRP2, UTRN, DMD and DAG1. Detected in a complex composed of at least EZR, AHNAK, PPL and PRX. Identified in a complex with EZR, AHNAK, BFSP1, BFSP2, ANK2, PLEC, VIM and spectrin. In terms of tissue distribution, detected in eye lens (at protein level).

It localises to the nucleus. Its subcellular location is the cytoplasm. The protein localises to the cell membrane. The protein resides in the cell junction. It is found in the adherens junction. Scaffolding protein that functions as part of a dystroglycan complex in Schwann cells, and as part of EZR and AHNAK-containing complexes in eye lens fiber cells. Required for the maintenance of the peripheral myelin sheath that is essential for normal transmission of nerve impulses and normal perception of sensory stimuli. Required for normal transport of MBP mRNA from the perinuclear to the paranodal regions. Required for normal remyelination after nerve injury. Required for normal elongation of Schwann cells and normal length of the internodes between the nodes of Ranvier. The demyelinated nodes of Ranvier permit saltatory transmission of nerve impulses; shorter internodes cause slower transmission of nerve impulses. Required for the formation of appositions between the abaxonal surface of the myelin sheath and the Schwann cell plasma membrane; the Schwann cell cytoplasm is restricted to regions between these appositions. Required for the formation of Cajal bands and of Schmidt-Lanterman incisures that correspond to short, cytoplasm-filled regions on myelinated nerves. Recruits DRP2 to the Schwann cell plasma membrane. Required for normal protein composition of the eye lens fiber cell plasma membrane and normal eye lens fiber cell morphology. This is Periaxin (PRX) from Bos taurus (Bovine).